The chain runs to 326 residues: Tagatose 1,6-diphosphate aldolase (326 aa).

It belongs to the aldolase LacD family.

It catalyses the reaction D-tagatofuranose 1,6-bisphosphate = D-glyceraldehyde 3-phosphate + dihydroxyacetone phosphate. Its pathway is carbohydrate metabolism; D-tagatose 6-phosphate degradation; D-glyceraldehyde 3-phosphate and glycerone phosphate from D-tagatose 6-phosphate: step 2/2. The polypeptide is Tagatose 1,6-diphosphate aldolase (Streptococcus pneumoniae (strain ATCC BAA-255 / R6)).